The primary structure comprises 483 residues: Chromatin structure-remodeling complex protein RSC6 (483 aa).

Disordered regions lie at residues 142 to 183 (KRKR…EAES) and 273 to 309 (AQDG…DKPE). A compositionally biased stretch (low complexity) spans 148–158 (SLSLPLNLQQP). Residues 171-180 (DNGEDEDSAE) are compositionally biased toward acidic residues.

To yeast SNF12. As to quaternary structure, interacts directly with RSC8. Component of the two forms of the RSC complex composed of at least either RSC1 or RSC2, and ARP7, ARP9, LDB7, NPL6, RSC3, RSC30, RSC4, RSC58, RSC6, RSC8, RSC9, SFH1, STH1, HTL1 and probably RTT102. The complexes interact with histone and histone variant components of centromeric chromatin.

It localises to the nucleus. Component of the chromatin structure-remodeling complex (RSC), which is involved in transcription regulation and nucleosome positioning. RSC is responsible for the transfer of a histone octamer from a nucleosome core particle to naked DNA. The reaction requires ATP and involves an activated RSC-nucleosome intermediate. Remodeling reaction also involves DNA translocation, DNA twist and conformational change. As a reconfigurer of centromeric and flanking nucleosomes, RSC complex is required both for proper kinetochore function in chromosome segregation and, via a PKC1-dependent signaling pathway, for organization of the cellular cytoskeleton. This subunit is essential for mitotic growth and suppresses formamide sensitivity of the RSC8 mutants. The protein is Chromatin structure-remodeling complex protein RSC6 (RSC6) of Saccharomyces cerevisiae (strain ATCC 204508 / S288c) (Baker's yeast).